The following is a 211-amino-acid chain: Large ribosomal subunit protein uL3 (211 aa).

Q151 bears the N5-methylglutamine mark.

The protein belongs to the universal ribosomal protein uL3 family. As to quaternary structure, part of the 50S ribosomal subunit. Forms a cluster with proteins L14 and L19. In terms of processing, methylated by PrmB.

One of the primary rRNA binding proteins, it binds directly near the 3'-end of the 23S rRNA, where it nucleates assembly of the 50S subunit. This Francisella tularensis subsp. tularensis (strain FSC 198) protein is Large ribosomal subunit protein uL3.